Consider the following 227-residue polypeptide: UPF0758 protein lpp2553 (227 aa).

Residues 102-225 enclose the MPN domain; the sequence is RLSNTQQTYA…YSIFAENKWV (124 aa). Residues His-173, His-175, and Asp-186 each contribute to the Zn(2+) site. Positions 173-186 match the JAMM motif motif; that stretch reads HNHPSGLSDASQQD.

Belongs to the UPF0758 family.

The polypeptide is UPF0758 protein lpp2553 (Legionella pneumophila (strain Paris)).